The sequence spans 259 residues: Proteasome subunit alpha 1 (259 aa).

Positions 231 to 259 (LVPAEPAAASESAPEPKPDTETKPADTQD) are disordered. The span at 233–243 (PAEPAAASESA) shows a compositional bias: low complexity. Over residues 244-259 (PEPKPDTETKPADTQD) the composition is skewed to basic and acidic residues.

The protein belongs to the peptidase T1A family. The 20S proteasome core is composed of 14 alpha and 14 beta subunits that assemble into four stacked heptameric rings, resulting in a barrel-shaped structure. The two inner rings, each composed of seven catalytic beta subunits, are sandwiched by two outer rings, each composed of seven alpha subunits. All four combinations of alpha- and beta-subunits (beta2-alpha1, beta2-alpha2, beta1-alpha2 and beta1-alpha1) yield fully assembled and proteolytically active proteasomes. The catalytic chamber with the active sites is on the inside of the barrel. Has probably a gated structure, the ends of the cylinder being occluded by the N-termini of the alpha-subunits. Is likely capped by the proteasome-associated ATPase, ARC. In terms of processing, the N-terminus is blocked.

It localises to the cytoplasm. The protein operates within protein degradation; proteasomal Pup-dependent pathway. The formation of the proteasomal ATPase ARC-20S proteasome complex, likely via the docking of the C-termini of ARC into the intersubunit pockets in the alpha-rings, may trigger opening of the gate for substrate entry. Interconversion between the open-gate and close-gate conformations leads to a dynamic regulation of the 20S proteasome proteolysis activity. In terms of biological role, component of the proteasome core, a large protease complex with broad specificity involved in protein degradation. The R.erythropolis proteasomes are able to cleave oligopeptides after Tyr, Phe and Leu, very poorly after Arg but not after Glu. Thus, displays chymotrypsin-like activity, low trypsin-like activity but no caspase-like activity. The sequence is that of Proteasome subunit alpha 1 from Rhodococcus erythropolis (Arthrobacter picolinophilus).